Consider the following 223-residue polypeptide: Nicotinamide/nicotinic acid mononucleotide adenylyltransferase 2 (223 aa).

Residues S11 and F12 each coordinate NAD(+). H19 is a binding site for ATP. Residues W87, T90, G116, D118, L133, W134, and R153 each coordinate NAD(+). 190–191 (TR) contributes to the ATP binding site.

This sequence belongs to the eukaryotic NMN adenylyltransferase family. It depends on a divalent metal cation as a cofactor.

It carries out the reaction beta-nicotinamide D-ribonucleotide + ATP + H(+) = diphosphate + NAD(+). It catalyses the reaction nicotinate beta-D-ribonucleotide + ATP + H(+) = deamido-NAD(+) + diphosphate. It functions in the pathway cofactor biosynthesis; NAD(+) biosynthesis; deamido-NAD(+) from nicotinate D-ribonucleotide: step 1/1. Its pathway is cofactor biosynthesis; NAD(+) biosynthesis; NAD(+) from nicotinamide D-ribonucleotide: step 1/1. Its function is as follows. Catalyzes the formation of NAD(+) from nicotinamide mononucleotide (NMN) and ATP. Can also use the deamidated form; nicotinic acid mononucleotide (NaMN) as substrate. The polypeptide is Nicotinamide/nicotinic acid mononucleotide adenylyltransferase 2 (Caenorhabditis elegans).